The primary structure comprises 147 residues: Large ribosomal subunit protein uL13 (147 aa).

The protein belongs to the universal ribosomal protein uL13 family. Part of the 50S ribosomal subunit.

This protein is one of the early assembly proteins of the 50S ribosomal subunit, although it is not seen to bind rRNA by itself. It is important during the early stages of 50S assembly. This is Large ribosomal subunit protein uL13 from Beutenbergia cavernae (strain ATCC BAA-8 / DSM 12333 / CCUG 43141 / JCM 11478 / NBRC 16432 / NCIMB 13614 / HKI 0122).